A 516-amino-acid polypeptide reads, in one-letter code: Maturase K (516 aa).

Belongs to the intron maturase 2 family. MatK subfamily.

The protein resides in the plastid. The protein localises to the chloroplast. In terms of biological role, usually encoded in the trnK tRNA gene intron. Probably assists in splicing its own and other chloroplast group II introns. The sequence is that of Maturase K from Chara globularis (Fragile stonewort).